Consider the following 233-residue polypeptide: uncharacterized protein (233 aa).

The the nascent chain stimulates ribosomal stalling during translation by interfering with the conformation of the peptidyl transferase center (PTC), and the translating mRNA by adopting a difficult-to-decode structure at the ribosome decoding center stretch occupies residues 196–212 (FFYEDYLIFDCRAKRRK).

In terms of biological role, acts as an endogenous target of the ribosome quality control (RQC) pathway. During translation, the nascent chain has a propensity to stall ribosomes, thereby stimulating activation of the RQC pathway. This is an uncharacterized protein from Saccharomyces cerevisiae (strain ATCC 204508 / S288c) (Baker's yeast).